Reading from the N-terminus, the 256-residue chain is D-aminoacyl-tRNA deacylase (256 aa).

This sequence belongs to the DtdA deacylase family. As to quaternary structure, monomer. It depends on Zn(2+) as a cofactor.

It catalyses the reaction a D-aminoacyl-tRNA + H2O = a tRNA + a D-alpha-amino acid + H(+). It carries out the reaction glycyl-tRNA(Ala) + H2O = tRNA(Ala) + glycine + H(+). D-aminoacyl-tRNA deacylase with broad substrate specificity. By recycling D-aminoacyl-tRNA to D-amino acids and free tRNA molecules, this enzyme counteracts the toxicity associated with the formation of D-aminoacyl-tRNA entities in vivo. This Thermoplasma volcanium (strain ATCC 51530 / DSM 4299 / JCM 9571 / NBRC 15438 / GSS1) protein is D-aminoacyl-tRNA deacylase.